The chain runs to 345 residues: S-adenosylmethionine:tRNA ribosyltransferase-isomerase (345 aa).

The protein belongs to the QueA family. As to quaternary structure, monomer.

Its subcellular location is the cytoplasm. The enzyme catalyses 7-aminomethyl-7-carbaguanosine(34) in tRNA + S-adenosyl-L-methionine = epoxyqueuosine(34) in tRNA + adenine + L-methionine + 2 H(+). It functions in the pathway tRNA modification; tRNA-queuosine biosynthesis. Transfers and isomerizes the ribose moiety from AdoMet to the 7-aminomethyl group of 7-deazaguanine (preQ1-tRNA) to give epoxyqueuosine (oQ-tRNA). The chain is S-adenosylmethionine:tRNA ribosyltransferase-isomerase from Helicobacter pylori (strain Shi470).